A 488-amino-acid polypeptide reads, in one-letter code: Inosine-5'-monophosphate dehydrogenase (488 aa).

CBS domains are found at residues 93-149 (VVTD…NQPV) and 153-214 (MTPK…CKDE). Residues Asp248 and 248–250 (DSS) each bind NAD(+). An N6-acetyllysine modification is found at Lys267. Residue 298–300 (GIG) participates in NAD(+) binding. Residues Gly300 and Gly302 each contribute to the K(+) site. Ser303 serves as a coordination point for IMP. Position 305 (Cys305) interacts with K(+). The active-site Thioimidate intermediate is the Cys305. IMP contacts are provided by residues 338–340 (DGG), 361–362 (GS), and 385–389 (YRGMG). Residue Arg401 is the Proton acceptor of the active site. Glu415 is a binding site for IMP. Lys428 bears the N6-acetyllysine mark. K(+) is bound by residues Glu469, Ser470, and His471.

The protein belongs to the IMPDH/GMPR family. As to quaternary structure, homotetramer. Requires K(+) as cofactor.

It carries out the reaction IMP + NAD(+) + H2O = XMP + NADH + H(+). The protein operates within purine metabolism; XMP biosynthesis via de novo pathway; XMP from IMP: step 1/1. With respect to regulation, mycophenolic acid (MPA) is a non-competitive inhibitor that prevents formation of the closed enzyme conformation by binding to the same site as the amobile flap. In contrast, mizoribine monophosphate (MZP) is a competitive inhibitor that induces the closed conformation. MPA is a potent inhibitor of mammalian IMPDHs but a poor inhibitor of the bacterial enzymes. MZP is a more potent inhibitor of bacterial IMPDH. Catalyzes the conversion of inosine 5'-phosphate (IMP) to xanthosine 5'-phosphate (XMP), the first committed and rate-limiting step in the de novo synthesis of guanine nucleotides, and therefore plays an important role in the regulation of cell growth. This Escherichia coli O157:H7 protein is Inosine-5'-monophosphate dehydrogenase.